The sequence spans 84 residues: Large ribosomal subunit protein bL27 (84 aa).

It belongs to the bacterial ribosomal protein bL27 family.

The polypeptide is Large ribosomal subunit protein bL27 (Campylobacter lari (strain RM2100 / D67 / ATCC BAA-1060)).